Here is a 208-residue protein sequence, read N- to C-terminus: Outer-membrane lipoprotein carrier protein (208 aa).

The N-terminal stretch at 1–21 is a signal peptide; the sequence is MPAFRYLIVLPLLCWGFASQA.

Belongs to the LolA family. As to quaternary structure, monomer.

It is found in the periplasm. Participates in the translocation of lipoproteins from the inner membrane to the outer membrane. Only forms a complex with a lipoprotein if the residue after the N-terminal Cys is not an aspartate (The Asp acts as a targeting signal to indicate that the lipoprotein should stay in the inner membrane). The chain is Outer-membrane lipoprotein carrier protein from Methylococcus capsulatus (strain ATCC 33009 / NCIMB 11132 / Bath).